Consider the following 110-residue polypeptide: Large ribosomal subunit protein eL30 (110 aa).

The protein belongs to the eukaryotic ribosomal protein eL30 family.

In Methanocaldococcus jannaschii (strain ATCC 43067 / DSM 2661 / JAL-1 / JCM 10045 / NBRC 100440) (Methanococcus jannaschii), this protein is Large ribosomal subunit protein eL30 (rpl30e).